The primary structure comprises 461 residues: Ornithine decarboxylase (461 aa).

Lys69 carries the post-translational modification N6-(pyridoxal phosphate)lysine. Pyridoxal 5'-phosphate contacts are provided by residues Ser200, Gly237, and 274-277; that span reads EPGR. Ser303 carries the phosphoserine; by CK2 modification. A substrate-binding site is contributed by 331–332; the sequence is YD. The active-site Proton donor; shared with dimeric partner is Cys360. At Cys360 the chain carries S-nitrosocysteine. Asp361 contributes to the substrate binding site. Residue Tyr389 coordinates pyridoxal 5'-phosphate.

Belongs to the Orn/Lys/Arg decarboxylase class-II family. Homodimer. Only the dimer is catalytically active, as the active sites are constructed of residues from both monomers. Pyridoxal 5'-phosphate serves as cofactor.

It carries out the reaction L-ornithine + H(+) = putrescine + CO2. The protein operates within amine and polyamine biosynthesis; putrescine biosynthesis via L-ornithine pathway; putrescine from L-ornithine: step 1/1. Its activity is regulated as follows. Inhibited by antizymes (AZs) OAZ1, OAZ2 and OAZ3 in response to polyamine levels. AZs inhibit the assembly of the functional homodimer by binding to ODC monomers. Additionally, OAZ1 targets ODC monomers for ubiquitin-independent proteolytic destruction by the 26S proteasome. Catalyzes the first and rate-limiting step of polyamine biosynthesis that converts ornithine into putrescine, which is the precursor for the polyamines, spermidine and spermine. Polyamines are essential for cell proliferation and are implicated in cellular processes, ranging from DNA replication to apoptosis. The polypeptide is Ornithine decarboxylase (Odc1) (Mus pahari (Gairdner's shrew-mouse)).